Reading from the N-terminus, the 2959-residue chain is uncharacterized protein (2959 aa).

It is found in the virion. This is an uncharacterized protein from Acanthamoeba polyphaga mimivirus (APMV).